The following is a 461-amino-acid chain: ATP synthase subunit beta (461 aa).

Residue 149–156 (GGAGVGKT) coordinates ATP.

This sequence belongs to the ATPase alpha/beta chains family. F-type ATPases have 2 components, CF(1) - the catalytic core - and CF(0) - the membrane proton channel. CF(1) has five subunits: alpha(3), beta(3), gamma(1), delta(1), epsilon(1). CF(0) has three main subunits: a(1), b(2) and c(9-12). The alpha and beta chains form an alternating ring which encloses part of the gamma chain. CF(1) is attached to CF(0) by a central stalk formed by the gamma and epsilon chains, while a peripheral stalk is formed by the delta and b chains.

It is found in the cell membrane. The catalysed reaction is ATP + H2O + 4 H(+)(in) = ADP + phosphate + 5 H(+)(out). Produces ATP from ADP in the presence of a proton gradient across the membrane. The catalytic sites are hosted primarily by the beta subunits. The chain is ATP synthase subunit beta from Caldanaerobacter subterraneus subsp. tengcongensis (strain DSM 15242 / JCM 11007 / NBRC 100824 / MB4) (Thermoanaerobacter tengcongensis).